We begin with the raw amino-acid sequence, 333 residues long: Foldase protein PrsA (333 aa).

An N-terminal signal peptide occupies residues 1 to 22 (MKKSTKLLAGIVTLASAMTLAA). The N-palmitoyl cysteine moiety is linked to residue Cys23. Cys23 carries the S-diacylglycerol cysteine lipid modification. One can recognise a PpiC domain in the interval 145–240 (TPEMTTQVTT…NKFYIVKVTK (96 aa)). The disordered stretch occupies residues 301-333 (DKKASKANTSKSDQKSSSDSSKDSQSSKSKSEK). Residues 312-322 (SDQKSSSDSSK) show a composition bias toward basic and acidic residues. Residues 323–333 (DSQSSKSKSEK) are compositionally biased toward low complexity.

Belongs to the PrsA family.

It localises to the cell membrane. The catalysed reaction is [protein]-peptidylproline (omega=180) = [protein]-peptidylproline (omega=0). In terms of biological role, plays a major role in protein secretion by helping the post-translocational extracellular folding of several secreted proteins. The polypeptide is Foldase protein PrsA (Streptococcus equi subsp. equi (strain 4047)).